A 268-amino-acid chain; its full sequence is Imidazole glycerol phosphate synthase subunit HisF (268 aa).

Catalysis depends on residues aspartate 12 and aspartate 131.

The protein belongs to the HisA/HisF family. Heterodimer of HisH and HisF.

It localises to the cytoplasm. It catalyses the reaction 5-[(5-phospho-1-deoxy-D-ribulos-1-ylimino)methylamino]-1-(5-phospho-beta-D-ribosyl)imidazole-4-carboxamide + L-glutamine = D-erythro-1-(imidazol-4-yl)glycerol 3-phosphate + 5-amino-1-(5-phospho-beta-D-ribosyl)imidazole-4-carboxamide + L-glutamate + H(+). The protein operates within amino-acid biosynthesis; L-histidine biosynthesis; L-histidine from 5-phospho-alpha-D-ribose 1-diphosphate: step 5/9. IGPS catalyzes the conversion of PRFAR and glutamine to IGP, AICAR and glutamate. The HisF subunit catalyzes the cyclization activity that produces IGP and AICAR from PRFAR using the ammonia provided by the HisH subunit. In Methanosphaerula palustris (strain ATCC BAA-1556 / DSM 19958 / E1-9c), this protein is Imidazole glycerol phosphate synthase subunit HisF.